Here is a 328-residue protein sequence, read N- to C-terminus: GTPase Obg 2 (328 aa).

In terms of domain architecture, Obg spans 1 to 139 (MSFRREKFIE…HCVLLKLKIV (139 aa)). The OBG-type G domain occupies 140–309 (SDVGIIGMPN…LHAQVKKAVV (170 aa)). Residues 146 to 153 (GMPNAGKS), 171 to 175 (FTTLE), 192 to 195 (DIPG), 259 to 262 (NKCD), and 290 to 292 (GDE) each bind GTP. 2 residues coordinate Mg(2+): Ser-153 and Thr-173.

This sequence belongs to the TRAFAC class OBG-HflX-like GTPase superfamily. OBG GTPase family. Monomer. The cofactor is Mg(2+).

It is found in the cytoplasm. Functionally, an essential GTPase which binds GTP, GDP and possibly (p)ppGpp with moderate affinity, with high nucleotide exchange rates and a fairly low GTP hydrolysis rate. Plays a role in control of the cell cycle, stress response, ribosome biogenesis and in those bacteria that undergo differentiation, in morphogenesis control. In Anaplasma marginale (strain St. Maries), this protein is GTPase Obg 2.